The following is a 615-amino-acid chain: MAEPLVLNSVIGFGGAIENGLIAHPDGRTIIYPLGSTIVLRDRADPRSQEFLQGHSDKVSCLALSRSGRYLASGQITYMGFTADIIIWDLESKQLIHRMALHKVKVQALDFSCDERFLASLGGQDDNALVLWDVASGNAICGSPCNTNFTNCVKFFNNSPDKLITAGNFNMNVWTYDAGNNKLRPTDATLGTLKRVFKSVVVDANDEYAYCGTTTGDVLQIALERVLFKNTGPAKGNVQMGVTATCEVPTGDILVGGGDGSLQLLRKMPALAGTKVEGAITSIALADMNARGFTFFVGTAMCNIYKPATSRLKEELVQTAHNDKINGMAFPNEYSEVFATCGTGFIRLWHLTTCRELLRIAVPNLECFCIAFTTDGSAILSGWSDGKIRAFGPQSGKIIFTINDAHQKAVTAIASTADSSRILSGGEEGMVRVWRIGRTSQTLEASMKDHKGPVNCIRIKGSGDECVSASSDGSCILWDLHTFKRRTSLFANTFFKSVVYHPDESQLVTAGTDRKVTYWDAYDGNAIRIIDGSDLDEVNALAVDRDGEALVSGGGDKLVKLWGYDEGHCYFVGVAHSGAITAVGVTPDKQRIVSVGTEGGIFIWDYQRPQTLADI.

WD repeat units follow at residues glycine 54–arginine 98, leucine 101–glycine 142, cysteine 145–arginine 184, glycine 232–lysine 275, alanine 320–arginine 359, valine 362–threonine 401, alanine 405–glutamate 444, aspartate 449–serine 488, phenylalanine 490–isoleucine 529, serine 533–valine 572, and alanine 575–aspartate 614.

It belongs to the CFAP52 family.

The protein localises to the cytoplasm. It is found in the cell projection. It localises to the cilium. The protein resides in the flagellum. May play a role in cell growth and/or survival. The polypeptide is Cilia- and flagella-associated protein 52 (Chlamydomonas reinhardtii (Chlamydomonas smithii)).